Reading from the N-terminus, the 314-residue chain is Ribose-phosphate pyrophosphokinase (314 aa).

Residues 37 to 39 (DGE) and 96 to 97 (RQ) contribute to the ATP site. Mg(2+) is bound by residues histidine 131 and aspartate 170. Lysine 194 is a catalytic residue. Residues arginine 196, aspartate 220, and 224–228 (DTGGT) each bind D-ribose 5-phosphate.

Belongs to the ribose-phosphate pyrophosphokinase family. Class I subfamily. As to quaternary structure, homohexamer. Mg(2+) is required as a cofactor.

It is found in the cytoplasm. The enzyme catalyses D-ribose 5-phosphate + ATP = 5-phospho-alpha-D-ribose 1-diphosphate + AMP + H(+). The protein operates within metabolic intermediate biosynthesis; 5-phospho-alpha-D-ribose 1-diphosphate biosynthesis; 5-phospho-alpha-D-ribose 1-diphosphate from D-ribose 5-phosphate (route I): step 1/1. In terms of biological role, involved in the biosynthesis of the central metabolite phospho-alpha-D-ribosyl-1-pyrophosphate (PRPP) via the transfer of pyrophosphoryl group from ATP to 1-hydroxyl of ribose-5-phosphate (Rib-5-P). The protein is Ribose-phosphate pyrophosphokinase of Vibrio vulnificus (strain CMCP6).